We begin with the raw amino-acid sequence, 145 residues long: Mini-ribonuclease 3 (145 aa).

The active site involves aspartate 27.

Belongs to the MrnC RNase family. In terms of assembly, homodimer. Mg(2+) serves as cofactor.

It is found in the cytoplasm. Involved in correct processing of both the 5' and 3' ends of 23S rRNA precursor. Processes 30S rRNA precursor transcript even in absence of ribonuclease 3 (Rnc); Rnc processes 30S rRNA into smaller rRNA precursors. The protein is Mini-ribonuclease 3 of Kosmotoga olearia (strain ATCC BAA-1733 / DSM 21960 / TBF 19.5.1).